Consider the following 317-residue polypeptide: Biotin synthase (317 aa).

Residues 42-260 form the Radical SAM core domain; that stretch reads NRIQLSTLLS…IAVTRLCMPK (219 aa). [4Fe-4S] cluster is bound by residues Cys57, Cys61, and Cys64. Residues Cys101, Cys132, Cys192, and Arg264 each coordinate [2Fe-2S] cluster.

Belongs to the radical SAM superfamily. Biotin synthase family. As to quaternary structure, homodimer. [4Fe-4S] cluster serves as cofactor. The cofactor is [2Fe-2S] cluster.

It carries out the reaction (4R,5S)-dethiobiotin + (sulfur carrier)-SH + 2 reduced [2Fe-2S]-[ferredoxin] + 2 S-adenosyl-L-methionine = (sulfur carrier)-H + biotin + 2 5'-deoxyadenosine + 2 L-methionine + 2 oxidized [2Fe-2S]-[ferredoxin]. The protein operates within cofactor biosynthesis; biotin biosynthesis; biotin from 7,8-diaminononanoate: step 2/2. Functionally, catalyzes the conversion of dethiobiotin (DTB) to biotin by the insertion of a sulfur atom into dethiobiotin via a radical-based mechanism. The polypeptide is Biotin synthase (Thiobacillus denitrificans (strain ATCC 25259 / T1)).